Consider the following 748-residue polypeptide: MATTVQLSDQSLRQLETLAIHTAHLIQPHGLVVVLQEPDLTISQISANCTGILGRSPEDLLGRTLGEVFDSFQIDPIQSRLTAGQISSLNPSKLWARVMGDDFVIFDGVFHRNSDGLLVCELEPAYTSDNLPFLGFYHMANAALNRLRQQANLRDFYDVIVEEVRRMTGFDRVMLYRFDENNHGDVIAEDKRDDMEPYLGLHYPESDIPQPARRLFIHNPIRVIPDVYGVAVPLTPAVNPSTNRAVDLTESILRSAYHCHLTYLKNMGVGASLTISLIKDGHLWGLIACHHQTPKVIPFELRKACEFFGRVVFSNISAQEDTETFDYRVQLAEHEAVLLDKMTTAADFVEGLTNHPDRLLGLTGSQGAAICFGEKLILVGETPDEKAVQYLLQWLENREVQDVFFTSSLSQIYPDAVNFKSVASGLLAIPIARHNFLLWFRPEVLQTVNWGGDPNHAYEATQEDGKIELHPRQSFDLWKEIVRLQSLPWQSVEIQSALALKKAIVNLILRQAEELAQLARNLERSNADLKKFAYIASHDLQEPLNQVSNYVQLLEMRYSEALDEDAKDFIDFAVTGVSLMQTLIDDILTYAKVDTQYAQLTFTDVQEVVDKALANLKQRIEESGAEIEVGSMPAVMADQIQLMQVFQNLIANGIKFAGDKSPKIKIWGDRQEDAWVFAVQDNGIGIDPQFFERIFVIFQRLHTRDEYKGTGMGLAICKKIIEGHQGQIWLESNPGEGSTFYFSIPIGN.

In terms of domain architecture, PAS spans 19 to 86; sequence AIHTAHLIQP…IQSRLTAGQI (68 aa). A chromophore binding domain region spans residues 87-510; that stretch reads SSLNPSKLWA…KKAIVNLILR (424 aa). The 169-residue stretch at 152–320 folds into the GAF domain; sequence NLRDFYDVIV…VVFSNISAQE (169 aa). Cys259 contacts a tetrapyrrole. Residues 535–748 form the Histidine kinase domain; sequence IASHDLQEPL…TFYFSIPIGN (214 aa). His538 bears the Phosphohistidine; by autocatalysis mark.

In the N-terminal section; belongs to the phytochrome family. As to quaternary structure, homodimer. Contains one covalently linked tetrapyrrole chromophore.

It catalyses the reaction ATP + protein L-histidine = ADP + protein N-phospho-L-histidine.. In terms of biological role, regulatory photoreceptor which exists in two forms that are reversibly interconvertible by light: the R form that absorbs maximally in the red region of the spectrum and the FR form that absorbs maximally in the far-red region. Also has a slight blue shift for the far-red maximum. Forms a two-component system with the Rrcp1 response regulator. The sequence is that of Phytochrome-like protein Cph1 (cph1) from Synechocystis sp. (strain ATCC 27184 / PCC 6803 / Kazusa).